The sequence spans 353 residues: Ribosomal RNA small subunit methyltransferase H (353 aa).

S-adenosyl-L-methionine-binding positions include 50–52 (GGY), aspartate 69, phenylalanine 96, aspartate 117, and glutamine 124. Positions 276–353 (AAQASRHVPG…PAPQGRGPRR (78 aa)) are disordered.

Belongs to the methyltransferase superfamily. RsmH family.

It is found in the cytoplasm. The enzyme catalyses cytidine(1402) in 16S rRNA + S-adenosyl-L-methionine = N(4)-methylcytidine(1402) in 16S rRNA + S-adenosyl-L-homocysteine + H(+). Functionally, specifically methylates the N4 position of cytidine in position 1402 (C1402) of 16S rRNA. This chain is Ribosomal RNA small subunit methyltransferase H, found in Methylorubrum extorquens (strain CM4 / NCIMB 13688) (Methylobacterium extorquens).